The sequence spans 285 residues: Chemotaxis protein LafT (285 aa).

A run of 4 helical transmembrane segments spans residues 4–23 (FLGVLTILVCVFGGYMWAGG), 34–51 (FLIIIGAAAGSLIIGNPP), 171–191 (ALPGFGILAAVGGIIITMQAI), and 201–222 (HVAAALVGTFIGIFGCYCGLDP). The Cytoplasmic segment spans residues 223–285 (LSNAMAQRVK…MEKWLAEQEG (63 aa)).

This sequence belongs to the MotA family.

Its subcellular location is the cell inner membrane. Its function is as follows. Required for rotation of the flagellar motor. Probable transmembrane proton channel. This chain is Chemotaxis protein LafT (lafT), found in Vibrio parahaemolyticus serotype O3:K6 (strain RIMD 2210633).